The sequence spans 1599 residues: Lacto-N-biosidase (1599 aa).

Residues methionine 1 to alanine 30 constitute a signal peptide (tat-type signal). Histidine 150 lines the beta-D-galactosyl-(1-&gt;3)-N-acetyl-D-glucosamine pocket. PbH1 repeat units follow at residues valine 165–lysine 190, methionine 224–alanine 255, phenylalanine 277–tyrosine 299, serine 325–tyrosine 347, cysteine 348–arginine 388, and cysteine 389–serine 437. Aspartate 178, aspartate 179, valine 182, and aspartate 238 together coordinate Ca(2+). Beta-D-galactosyl-(1-&gt;3)-N-acetyl-D-glucosamine is bound by residues lysine 244 and histidine 245. Beta-D-galactosyl-(1-&gt;3)-N-acetyl-D-glucosamine is bound by residues tryptophan 387, aspartate 411, aspartate 418, and cysteine 441. Catalysis depends on aspartate 411, which acts as the Proton donor/acceptor. Aspartate 418 (nucleophile) is an active-site residue. The stretch at glycine 469–alanine 506 is one PbH1 7 repeat. One can recognise an FIVAR domain in the interval aspartate 1436–leucine 1498. Positions alanine 1494–proline 1509 are enriched in basic and acidic residues. The tract at residues alanine 1494–threonine 1568 is disordered. Residues aspartate 1535–serine 1558 show a composition bias toward gly residues. Residues aspartate 1559–threonine 1568 are compositionally biased toward low complexity. The chain crosses the membrane as a helical span at residues valine 1574–alanine 1594.

The protein belongs to the glycosyl hydrolase 136 (GH136) family. In terms of assembly, homodimer. Requires Ca(2+) as cofactor. It depends on Mg(2+) as a cofactor. Predicted to be exported by the Tat system. The position of the signal peptide cleavage has not been experimentally proven.

Its subcellular location is the cell membrane. The catalysed reaction is beta-D-Gal-(1-&gt;3)-beta-D-GlcNAc-(1-&gt;3)-beta-D-Gal-(1-&gt;4)-D-Glc + H2O = beta-D-galactosyl-(1-&gt;3)-N-acetyl-D-glucosamine + lactose. Requires the chaperone LnbY for its proper folding and active expression. Is potently and competitively inhibited by LNB-PUGNAc and LNB-NHAcDNJ in vitro. Present in the infant gut, this enzyme is involved in the assimilation of type-1 human milk oligosaccharides (HMOs). It hydrolyzes via a retaining mechanism the beta-D-GlcNAc-(1-&gt;3)-beta-D-Gal linkage in lacto-N-tetraose (LNT or beta-D-Gal-(1-&gt;3)-beta-D-GlcNAc-(1-&gt;3)-beta-D-Gal-(1-&gt;4)-D-Glc), an abundant HMO unique to human breast milk, releasing lacto-N-biose (LNB or beta-D-Gal-(1-&gt;3)-D-GlcNAc) and lactose. With a much lower efficiency, is also able to cleave the same linkage in lacto-N-fucopentaose I (alpha-Fuc(1-&gt;2)-beta-D-Gal-(1-&gt;3)-beta-D-GlcNAc(1-&gt;3)-beta-D-Gal-(1-&gt;4)-D-Glc), and sialyllacto-N-tetraose a (alpha-Neu5Ac-(2-&gt;3)-beta-D-Gal-(1-&gt;3)-beta-D-GlcNAc-(1-&gt;3)-beta-D-Gal-(1-&gt;4)-D-Glc). Is a key enzymatic factor for growth and proliferation of B.longum in the gut ecosystem of breast-fed infants. This chain is Lacto-N-biosidase, found in Bifidobacterium longum subsp. longum (strain ATCC 15707 / DSM 20219 / JCM 1217 / NCTC 11818 / E194b).